Consider the following 403-residue polypeptide: Tripartite motif-containing protein 59 (403 aa).

The RING-type zinc finger occupies 10-60; it reads CPICYSIFEDPRVLPCSHTFCRNCLENILQASGNFYIWRPLRIPLKCPNCR. The B box-type zinc finger occupies 92 to 134; it reads PDIVTCPEHYRQPLNVYCLLDKKLVCGHCLTIGQHHGHPIDDL. 4 residues coordinate Zn(2+): cysteine 97, histidine 100, cysteine 120, and histidine 126. Positions 163 to 246 form a coiled coil; that stretch reads LIEKLKEQKS…ALTISLQEES (84 aa). The helical transmembrane segment at 329-349 threads the bilayer; that stretch reads ILNIVVVTLISVILMSILFFN.

The protein belongs to the TRIM/RBCC family. Interacts with ECSIT.

The protein resides in the endoplasmic reticulum membrane. It carries out the reaction S-ubiquitinyl-[E2 ubiquitin-conjugating enzyme]-L-cysteine + [acceptor protein]-L-lysine = [E2 ubiquitin-conjugating enzyme]-L-cysteine + N(6)-ubiquitinyl-[acceptor protein]-L-lysine.. Its pathway is protein modification; protein ubiquitination. In terms of biological role, E3 ubiquitin ligase involved in different processes such as development and immune response. Serves as a negative regulator for innate immune signaling pathways by suppressing RLR-induced activation of IRF3/7 and NF-kappa-B via interaction with adapter ECSIT. Regulates autophagy through modulating both the transcription and the ubiquitination of BECN1. On the one hand, regulates the transcription of BECN1 through negatively modulating the NF-kappa-B pathway. On the other hand, regulates TRAF6-mediated 'Lys-63'-linked ubiquitination of BECN1, thus affecting the formation of the BECN1-PIK3C3 complex. In addition, mediates 'Lys-48'-linked ubiquitination of TRAF6 and thereby promotes TRAF6 proteasomal degradation. Also acts as a critical regulator for early embryo development from blastocyst stage to gastrula through modulating F-actin assembly and WASH1 'Lys-63'-linked ubiquitination. The sequence is that of Tripartite motif-containing protein 59 (TRIM59) from Homo sapiens (Human).